The following is an 801-amino-acid chain: Mitochondrial intermediate peptidase (801 aa).

Residues 1 to 41 (MKPQLLTPLRRRPWTCRQCLQRLQRLQQQTRRSFETAASPA) constitute a mitochondrion transit peptide. Positions 31 to 54 (RRSFETAASPAPGHTQVDYIPADA) are disordered. H565 contributes to the Zn(2+) binding site. The active site involves E566. Residues H569 and H572 each contribute to the Zn(2+) site.

It belongs to the peptidase M3 family. Zn(2+) is required as a cofactor.

The protein resides in the mitochondrion matrix. It carries out the reaction Release of an N-terminal octapeptide as second stage of processing of some proteins imported into the mitochondrion.. In terms of biological role, cleaves proteins, imported into the mitochondrion, to their mature size. While most mitochondrial precursor proteins are processed to the mature form in one step by mitochondrial processing peptidase (MPP), the sequential cleavage by MIP of an octapeptide after initial processing by MPP is a required step for a subgroup of nuclear-encoded precursor proteins destined for the matrix or the inner membrane. This is Mitochondrial intermediate peptidase (oct1) from Aspergillus clavatus (strain ATCC 1007 / CBS 513.65 / DSM 816 / NCTC 3887 / NRRL 1 / QM 1276 / 107).